A 412-amino-acid chain; its full sequence is Alanyl-tRNA editing protein Aarsd1 (412 aa).

His-109 and His-113 together coordinate Zn(2+). Ser-174 carries the phosphoserine modification. Zn(2+) is bound by residues Cys-209 and His-213.

It belongs to the class-II aminoacyl-tRNA synthetase family. Alax-L subfamily. The cofactor is Zn(2+).

Its subcellular location is the cytoplasm. Functionally, functions in trans to edit the amino acid moiety from incorrectly charged Ser-tRNA(Ala). This Mus musculus (Mouse) protein is Alanyl-tRNA editing protein Aarsd1 (Aarsd1).